We begin with the raw amino-acid sequence, 238 residues long: Probable transcriptional regulatory protein YcdB (238 aa).

The protein belongs to the TACO1 family. YeeN subfamily.

Its subcellular location is the cytoplasm. This chain is Probable transcriptional regulatory protein YcdB (ycdB), found in Lactococcus lactis subsp. lactis (strain IL1403) (Streptococcus lactis).